The primary structure comprises 306 residues: Porphobilinogen deaminase (306 aa).

At Cys239 the chain carries S-(dipyrrolylmethanemethyl)cysteine.

The protein belongs to the HMBS family. In terms of assembly, monomer. Requires dipyrromethane as cofactor.

The catalysed reaction is 4 porphobilinogen + H2O = hydroxymethylbilane + 4 NH4(+). Its pathway is porphyrin-containing compound metabolism; protoporphyrin-IX biosynthesis; coproporphyrinogen-III from 5-aminolevulinate: step 2/4. Its function is as follows. Tetrapolymerization of the monopyrrole PBG into the hydroxymethylbilane pre-uroporphyrinogen in several discrete steps. The sequence is that of Porphobilinogen deaminase from Helicobacter acinonychis (strain Sheeba).